The primary structure comprises 696 residues: Chitin synthase regulator SKT5 (696 aa).

Disordered stretches follow at residues 37–67 and 90–145; these read GQDF…SANQ and QEED…IKKR. The span at 41-53 shows a compositional bias: basic and acidic residues; the sequence is SDNKENRENRDNE. Over residues 104–126 the composition is skewed to low complexity; sequence LNNSNNTSLSSLGSTPTNSPSPG. The span at 129 to 139 shows a compositional bias: polar residues; the sequence is RQTNSSTSLTK. The residue at position 148 (S148) is a Phosphoserine. Sel1-like repeat units follow at residues 271–306, 307–342, 343–382, 386–423, 424–460, 461–498, and 499–534; these read SDAQ…KHGH, IESA…SRNH, PSAM…ARAN, AAAP…SLGH, VPSA…LKGD, SVAM…NAGL, and PKAQ…GNED. Residues S561 and S563 each carry the phosphoserine modification. A Phosphothreonine modification is found at T564. 3 stretches are compositionally biased toward polar residues: residues 576-593, 605-634, and 651-661; these read SNVG…TFFT, LQIN…SSAK, and VSLSNMGSSNM. The segment at 576-696 is disordered; that stretch reads SNVGSNSRVS…GKKKKDCVIM (121 aa). The segment covering 662–675 has biased composition (basic and acidic residues); it reads IRKDFPAVKTESKK. Over residues 680-696 the composition is skewed to basic residues; it reads KNKKDKQGKKKKDCVIM. At C693 the chain carries Cysteine methyl ester. The S-farnesyl cysteine moiety is linked to residue C693. Positions 694 to 696 are cleaved as a propeptide — removed in mature form; it reads VIM.

The protein belongs to the SKT5 family. May interact with CHS3 and seems to be an adapter (along with BNI4) to link CHS3 to septins. Post-translationally, farnesylation is required for chitin synthase CHS3 activity but is not required for SKT5 membrane association.

Its subcellular location is the cell membrane. Activator of the chitin synthase CHS3 which polymerizes chitin, a structural polymer of the fungal cell wall. This chain is Chitin synthase regulator SKT5, found in Saccharomyces cerevisiae (strain ATCC 204508 / S288c) (Baker's yeast).